The primary structure comprises 265 residues: WUSCHEL-related homeobox 3B (265 aa).

The segment at residues 4–68 (TPSTRWCPTP…NHKARERQRL (65 aa)) is a DNA-binding region (homeobox; WUS-type). Disordered stretches follow at residues 77-107 (QQQY…APPA) and 242-265 (PTKS…TSTN). The segment covering 254 to 265 (SSKSSSCSTSTN) has biased composition (low complexity).

It belongs to the WUS homeobox family. Predominantly expressed in tissues enriched for shoot meristems and young lateral organ primordia. First expressed in lateral domains of shoot meristems. It is then expressed in the margins of young lateral organ primordia. Not expressed in roots, seedling leaves or fully expanded coleoptiles. Also expressed in vegetative shoot apices (five leaf primordia and the SAM) and in the male inflorescence. Expressed at high level in the female inflorescence.

It is found in the nucleus. Functionally, probable transcription factor required to initiate organ founder cells in a lateral domain of shoot meristems. Involved in leaf formation. This Zea mays (Maize) protein is WUSCHEL-related homeobox 3B (WOX3B).